Reading from the N-terminus, the 323-residue chain is tRNA U34 carboxymethyltransferase (323 aa).

Carboxy-S-adenosyl-L-methionine-binding positions include Lys91, Trp105, Lys110, Gly130, 180-181, Met196, Tyr200, and Arg315; that span reads IE.

It belongs to the class I-like SAM-binding methyltransferase superfamily. CmoB family. As to quaternary structure, homotetramer.

The catalysed reaction is carboxy-S-adenosyl-L-methionine + 5-hydroxyuridine(34) in tRNA = 5-carboxymethoxyuridine(34) in tRNA + S-adenosyl-L-homocysteine + H(+). Functionally, catalyzes carboxymethyl transfer from carboxy-S-adenosyl-L-methionine (Cx-SAM) to 5-hydroxyuridine (ho5U) to form 5-carboxymethoxyuridine (cmo5U) at position 34 in tRNAs. The polypeptide is tRNA U34 carboxymethyltransferase (Citrifermentans bemidjiense (strain ATCC BAA-1014 / DSM 16622 / JCM 12645 / Bem) (Geobacter bemidjiensis)).